Reading from the N-terminus, the 368-residue chain is Carbamoyl phosphate synthase small chain (368 aa).

The tract at residues 1–178 (MKAVLGLEDG…GAAGAWKGSG (178 aa)) is CPSase. 3 residues coordinate L-glutamine: serine 45, glycine 230, and glycine 232. Positions 182-368 (HAVVVDLGIK…KVVKVLGGGL (187 aa)) constitute a Glutamine amidotransferase type-1 domain. Catalysis depends on cysteine 257, which acts as the Nucleophile. L-glutamine is bound by residues phenylalanine 258, glutamine 261, asparagine 299, glycine 301, and tyrosine 302. Active-site residues include histidine 342 and glutamate 344.

The protein belongs to the CarA family. As to quaternary structure, composed of two chains; the small (or glutamine) chain promotes the hydrolysis of glutamine to ammonia, which is used by the large (or ammonia) chain to synthesize carbamoyl phosphate. Tetramer of heterodimers (alpha,beta)4.

It catalyses the reaction hydrogencarbonate + L-glutamine + 2 ATP + H2O = carbamoyl phosphate + L-glutamate + 2 ADP + phosphate + 2 H(+). The catalysed reaction is L-glutamine + H2O = L-glutamate + NH4(+). It functions in the pathway amino-acid biosynthesis; L-arginine biosynthesis; carbamoyl phosphate from bicarbonate: step 1/1. It participates in pyrimidine metabolism; UMP biosynthesis via de novo pathway; (S)-dihydroorotate from bicarbonate: step 1/3. Small subunit of the glutamine-dependent carbamoyl phosphate synthetase (CPSase). CPSase catalyzes the formation of carbamoyl phosphate from the ammonia moiety of glutamine, carbonate, and phosphate donated by ATP, constituting the first step of 2 biosynthetic pathways, one leading to arginine and/or urea and the other to pyrimidine nucleotides. The small subunit (glutamine amidotransferase) binds and cleaves glutamine to supply the large subunit with the substrate ammonia. This is Carbamoyl phosphate synthase small chain from Methanosarcina mazei (strain ATCC BAA-159 / DSM 3647 / Goe1 / Go1 / JCM 11833 / OCM 88) (Methanosarcina frisia).